Reading from the N-terminus, the 311-residue chain is Tryptophan 2,3-dioxygenase (311 aa).

The disordered stretch occupies residues 1–37 (MQPPGGDAPAGCPFSGARAAQPAQAAHEAPHVPGEAD). Residues 17-27 (ARAAQPAQAAH) are compositionally biased toward low complexity. Residues 80 to 84 (FIIQH), Tyr-142, and Arg-146 each bind substrate. His-269 is a binding site for heme. Thr-283 serves as a coordination point for substrate.

It belongs to the tryptophan 2,3-dioxygenase family. Homotetramer. It depends on heme as a cofactor.

It carries out the reaction L-tryptophan + O2 = N-formyl-L-kynurenine. Its pathway is amino-acid degradation; L-tryptophan degradation via kynurenine pathway; L-kynurenine from L-tryptophan: step 1/2. Its function is as follows. Heme-dependent dioxygenase that catalyzes the oxidative cleavage of the L-tryptophan (L-Trp) pyrrole ring and converts L-tryptophan to N-formyl-L-kynurenine. Catalyzes the oxidative cleavage of the indole moiety. In Burkholderia orbicola (strain MC0-3), this protein is Tryptophan 2,3-dioxygenase.